A 436-amino-acid chain; its full sequence is Gamma-glutamyl phosphate reductase (436 aa).

It belongs to the gamma-glutamyl phosphate reductase family.

The protein resides in the cytoplasm. It carries out the reaction L-glutamate 5-semialdehyde + phosphate + NADP(+) = L-glutamyl 5-phosphate + NADPH + H(+). It functions in the pathway amino-acid biosynthesis; L-proline biosynthesis; L-glutamate 5-semialdehyde from L-glutamate: step 2/2. Functionally, catalyzes the NADPH-dependent reduction of L-glutamate 5-phosphate into L-glutamate 5-semialdehyde and phosphate. The product spontaneously undergoes cyclization to form 1-pyrroline-5-carboxylate. The chain is Gamma-glutamyl phosphate reductase from Prochlorococcus marinus (strain MIT 9312).